Reading from the N-terminus, the 748-residue chain is MPAHTRSLASKELCMNHQQIDAADKTERVTVGGMQVAKVLRDFLTESVLPRVGVDAERFWNGFGDIVRDMTPRNRELLARRDELQAQLDEYYRENPGKPDPEKYEAFLREIGYLVDEPAPAEIRTQNIDSEIATTAGPQLVVPILNARFALNAANARWGSLYDALYGTNAIPDEDGAERGAEYNPVRGQKVIQWGRDFLDAVLPLDGASHADVEKYNITDGKLAAHVNDGIYRLKDRDAYLGFTGYFEDPTSILLQNNGLHIELQIDPTHPIGKEDKTGLKDIILESAITTIMDFEDSVAAVDAEDKTLGYRNWFLLNTGELTEEVAKGDRTFTRKLNDDRVFIGKNGAELTLHGRSLLFVRNVGHLMTNPAILVDGEEIYEGIMDAIITTVCAIPGIAPQNKKKNSRKGSIYIVKPKQHGPEEVAFTNELFARVEDLLDLPRHTLKVGVMDEERRTSVNLDACIMEVADRLAFINTGFLDRTGDEIHTSMEAGAMVRKADMQTAPWKQAYEDNNVDAGIQRGLPGKAQIGKGMWAMTELMGEMLEKKIGQLREGANTAWVPSPTGATLHATHYHRVDVFKVQDELRAAGRRDSLGKILDVPVAPDTNWTDAEKREELDNNCQSILGYVVRWVEQGVGCSKVPDIHDIDLMEDRATLRISSQILANWLRHGVVTEEQVIESLERMAVVVDEQNAGDPNYLNMAPNFTESVAFQAARDLILKGTESPAGYTEPILHARRREFKELHGIK.

Acetyl-CoA contacts are provided by residues Val141, 148–149 (RF), Ser298, and Arg335. Arg362 functions as the Proton acceptor in the catalytic mechanism. Glyoxylate contacts are provided by residues Arg362, Glu453, and 478–481 (GFLD). The Mg(2+) site is built by Glu453 and Asp481. Pro562 contributes to the acetyl-CoA binding site. Cysteine sulfenic acid (-SOH) is present on Cys639. Asp653 serves as the catalytic Proton donor.

It belongs to the malate synthase family. GlcB subfamily. As to quaternary structure, monomer. Requires Mg(2+) as cofactor.

Its subcellular location is the cytoplasm. The catalysed reaction is glyoxylate + acetyl-CoA + H2O = (S)-malate + CoA + H(+). It participates in carbohydrate metabolism; glyoxylate cycle; (S)-malate from isocitrate: step 2/2. Involved in the glycolate utilization. Catalyzes the condensation and subsequent hydrolysis of acetyl-coenzyme A (acetyl-CoA) and glyoxylate to form malate and CoA. In Corynebacterium efficiens (strain DSM 44549 / YS-314 / AJ 12310 / JCM 11189 / NBRC 100395), this protein is Malate synthase G.